The sequence spans 968 residues: RNA polymerase-associated protein RapA (968 aa).

The Helicase ATP-binding domain occupies 164 to 334 (EVGQRHAPRV…FARLRLLDPN (171 aa)). 177–184 (DEVGLGKT) contributes to the ATP binding site. Residues 280 to 283 (DEAH) carry the DEAH box motif. Residues 493–644 (WLVDFLLDLR…TCPTGRALYD (152 aa)) enclose the Helicase C-terminal domain.

This sequence belongs to the SNF2/RAD54 helicase family. RapA subfamily. Interacts with the RNAP. Has a higher affinity for the core RNAP than for the holoenzyme. Its ATPase activity is stimulated by binding to RNAP.

In terms of biological role, transcription regulator that activates transcription by stimulating RNA polymerase (RNAP) recycling in case of stress conditions such as supercoiled DNA or high salt concentrations. Probably acts by releasing the RNAP, when it is trapped or immobilized on tightly supercoiled DNA. Does not activate transcription on linear DNA. Probably not involved in DNA repair. The sequence is that of RNA polymerase-associated protein RapA from Sodalis glossinidius (strain morsitans).